Here is a 226-residue protein sequence, read N- to C-terminus: Peroxiredoxin-like 2C (226 aa).

This sequence belongs to the peroxiredoxin-like PRXL2 family. PRXL2C subfamily. As to expression, expressed in gastric tissues.

Its function is as follows. May positively regulate ERK1/2 signaling and AKT1 activation leading to HIF1A up-regulation with an increased expression of glycolysis genes and enhanced glycolysis. The protein is Peroxiredoxin-like 2C of Homo sapiens (Human).